The sequence spans 380 residues: Cobalt-precorrin-5B C(1)-methyltransferase (380 aa).

It belongs to the CbiD family.

The enzyme catalyses Co-precorrin-5B + S-adenosyl-L-methionine = Co-precorrin-6A + S-adenosyl-L-homocysteine. Its pathway is cofactor biosynthesis; adenosylcobalamin biosynthesis; cob(II)yrinate a,c-diamide from sirohydrochlorin (anaerobic route): step 6/10. In terms of biological role, catalyzes the methylation of C-1 in cobalt-precorrin-5B to form cobalt-precorrin-6A. This chain is Cobalt-precorrin-5B C(1)-methyltransferase, found in Methanosphaera stadtmanae (strain ATCC 43021 / DSM 3091 / JCM 11832 / MCB-3).